The chain runs to 122 residues: Ribosomal protein eL22-like (122 aa).

3 positions are modified to phosphoserine: S112, S118, and S120.

It belongs to the eukaryotic ribosomal protein eL22 family.

This chain is Ribosomal protein eL22-like (RPL22L1), found in Homo sapiens (Human).